The following is a 305-amino-acid chain: RNA-binding protein with serine-rich domain 1 (305 aa).

Basic residues predominate over residues Met-1–Ser-10. The necessary for interaction with SRP54, nuclear localization and exon-skipping stretch occupies residues Met-1–Thr-161. A disordered region spans residues Met-1–Arg-170. Positions Met-1 to Leu-220 are necessary for interaction with the cleaved p110 isoform of CDC2L1. Residues Lys-7 and Lys-15 each participate in a glycyl lysine isopeptide (Lys-Gly) (interchain with G-Cter in SUMO2) cross-link. The segment covering Asp-33–Arg-59 has biased composition (basic and acidic residues). The residue at position 53 (Ser-53) is a Phosphoserine. Positions Ala-68–Pro-126 are enriched in low complexity. The segment at Ser-69 to Ser-121 is necessary for interactions with UPF2 and UPF3B and UPF2-dependent NMD. Basic residues-rich tracts occupy residues Ser-127–Pro-143 and Arg-151–Arg-167. A phosphoserine mark is found at Ser-155 and Ser-157. A necessary for interaction with PNN and exon-skipping region spans residues Pro-156–Trp-242. Positions Lys-159–Arg-244 are interaction with SAP18 and ACIN1. Phosphothreonine is present on Thr-161. In terms of domain architecture, RRM spans Thr-161–Ala-240. N6-acetyllysine is present on Lys-218. Residues Val-238–Arg-305 form a necessary for interaction with TRA2B, nuclear localization and exon-skipping region. A disordered region spans residues Ala-240–Arg-305. Over residues Trp-242 to Met-262 the composition is skewed to pro residues. Basic residues predominate over residues Ser-266–Arg-298.

Belongs to the splicing factor SR family. Found in mRNA splicing-dependent exon junction complexes (EJC). Found in a post-splicing complex with NXF1, RBM8A, UPF1, UPF2, UPF3A, UPF3B and RNPS1. Component of the heterotrimeric ASAP (apoptosis- and splicing-associated protein) and PSAP complexes consisting of RNPS1, SAP18 and either ACIN1 or PNN, respectively; the ASAP and PSAP complexes probably are formed mutually exclusive. Component of the active spliceosome. Associates with polysomes. Interacts with the cleaved p110 isoform of CDC2L1, CSNK2A1, PNN, SART3, SRP54, SRRM1 and TRA2B/SFRS10. Post-translationally, phosphorylated on one or more of the four Ser/Thr residues (Ser-43, Thr-49, Ser-52 or Ser-53). Ser-53 phosphorylation site is important for splicing and translation stimulation activity in vitro.

The protein resides in the nucleus. It localises to the nucleus speckle. The protein localises to the cytoplasm. Functionally, part of pre- and post-splicing multiprotein mRNP complexes. Auxiliary component of the splicing-dependent multiprotein exon junction complex (EJC) deposited at splice junction on mRNAs. The EJC is a dynamic structure consisting of core proteins and several peripheral nuclear and cytoplasmic associated factors that join the complex only transiently either during EJC assembly or during subsequent mRNA metabolism. Component of the ASAP and PSAP complexes which bind RNA in a sequence-independent manner and are proposed to be recruited to the EJC prior to or during the splicing process and to regulate specific excision of introns in specific transcription subsets. The ASAP complex can inhibit RNA processing during in vitro splicing reactions. The ASAP complex promotes apoptosis and is disassembled after induction of apoptosis. Enhances the formation of the ATP-dependent A complex of the spliceosome. Involved in both constitutive splicing and, in association with SRP54 and TRA2B/SFRS10, in distinctive modulation of alternative splicing in a substrate-dependent manner. Involved in the splicing modulation of BCL2L1/Bcl-X (and probably other apoptotic genes); specifically inhibits formation of proapoptotic isoforms such as Bcl-X(S); the activity is different from the established EJC assembly and function. Participates in mRNA 3'-end cleavage. Involved in UPF2-dependent nonsense-mediated decay (NMD) of mRNAs containing premature stop codons. Also mediates increase of mRNA abundance and translational efficiency. Binds spliced mRNA 20-25 nt upstream of exon-exon junctions. The polypeptide is RNA-binding protein with serine-rich domain 1 (Rnps1) (Rattus norvegicus (Rat)).